Reading from the N-terminus, the 1308-residue chain is Receptor tyrosine-protein kinase erbB-4 (1308 aa).

The first 25 residues, 1–25 (MKPATGLWVWVSLLVAAGTVQPSDS), serve as a signal peptide directing secretion. Residues 26-651 (QSVCAGTENK…STLPQHARTP (626 aa)) are Extracellular-facing. A disulfide bond links cysteine 29 and cysteine 56. N-linked (GlcNAc...) asparagine glycosylation is found at asparagine 138, asparagine 174, and asparagine 181. Disulfide bonds link cysteine 156/cysteine 186, cysteine 189/cysteine 197, cysteine 193/cysteine 205, cysteine 213/cysteine 221, cysteine 217/cysteine 229, cysteine 230/cysteine 238, cysteine 234/cysteine 246, cysteine 249/cysteine 258, cysteine 262/cysteine 289, cysteine 293/cysteine 304, cysteine 308/cysteine 323, and cysteine 326/cysteine 330. Asparagine 253 is a glycosylation site (N-linked (GlcNAc...) asparagine). N-linked (GlcNAc...) asparagine glycans are attached at residues asparagine 358, asparagine 410, asparagine 473, and asparagine 495. 10 disulfide bridges follow: cysteine 503–cysteine 512, cysteine 507–cysteine 520, cysteine 523–cysteine 532, cysteine 536–cysteine 552, cysteine 555–cysteine 569, cysteine 559–cysteine 577, cysteine 580–cysteine 589, cysteine 593–cysteine 614, cysteine 617–cysteine 625, and cysteine 621–cysteine 633. Asparagine 548 carries an N-linked (GlcNAc...) asparagine glycan. N-linked (GlcNAc...) asparagine glycosylation occurs at asparagine 576. Asparagine 620 is a glycosylation site (N-linked (GlcNAc...) asparagine). The chain crosses the membrane as a helical span at residues 652 to 675 (LIAAGVIGGLFILVIVGLTFAVYV). The short motif at 676-684 (RRKSIKKKR) is the Nuclear localization signal element. Residues 676 to 1308 (RRKSIKKKRA…PPYRHRNTVV (633 aa)) are Cytoplasmic-facing. In terms of domain architecture, Protein kinase spans 718 to 985 (LKRVKVLGSG…RMARDPQRYL (268 aa)). ATP is bound by residues 724 to 732 (LGSGAFGTV), lysine 751, 797 to 799 (QLM), and 843 to 848 (DLAARN). Aspartate 843 (proton acceptor) is an active-site residue. Phosphotyrosine; by autocatalysis occurs at positions 875, 1035, 1056, 1150, 1162, 1188, 1202, 1242, 1258, and 1284. 2 consecutive short sequence motifs (PPxY motif) follow at residues 1032-1035 (PPIY) and 1053-1056 (PPAY). Positions 1117 to 1150 (PHVQEDSSTQRYSADPTVFAPERSPRGELDEEGY) are disordered. The PPxY motif 3 signature appears at 1298–1301 (PPPY). The PDZ-binding motif lies at 1306–1308 (TVV).

The protein belongs to the protein kinase superfamily. Tyr protein kinase family. EGF receptor subfamily. Monomer in the absence of bound ligand. Homodimer or heterodimer with another ERBB family member upon ligand binding, thus forming heterotetramers. Interacts with EGFR and ERBB2. Interacts with CBFA2T3. Interacts with DLG2 (via its PDZ domain), DLG3 (via its PDZ domain), DLG4 (via its PDZ domain) and SNTB2 (via its PDZ domain). Interacts with MUC1. Interacts (via its PPxy motifs) with WWOX. Interacts (via the PPxY motif 3 of isoform JM-A CYT-2) with YAP1 (via the WW domain 1 of isoform 1). Interacts (isoform JM-A CYT-1 and isoform JM-B CYT-1) with WWP1. Interacts (via its intracellular domain) with TRIM28. Interacts (via the intracellular domains of both CYT-1 and CYT-2 isoforms) with KAP1; the interaction does not phosphorylate KAP1 but represses ERBB4-mediated transcriptional activity. Interacts with PRPU, DDX23, MATR3, RBM15, ILF3, KAP1, U5S1, U2SURP, ITCH, HNRNPU, AP2A1, NULC, LEO1, WWP2, IGHG1, HXK1, GRB7 and SRRT. Interacts (phosphorylated isoform JM-A CYT-1 and isoform JM-B CYT-1) with PIK3R1. Interacts with SHC1. Interacts with GRB2. Interacts (soluble intracellular domain) with STAT5A. Interacts (soluble intracellular domain) with BCL2. Interacts (phosphorylated) with STAT1. In terms of processing, isoform JM-A CYT-1 and isoform JM-A CYT-2 are processed by ADAM17. Proteolytic processing in response to ligand or 12-O-tetradecanoylphorbol-13-acetate stimulation results in the production of 120 kDa soluble receptor forms and intermediate membrane-anchored 80 kDa fragments (m80HER4), which are further processed by a presenilin-dependent gamma-secretase to release a cytoplasmic intracellular domain (E4ICD; E4ICD1/s80Cyt1 or E4ICD2/s80Cyt2, depending on the isoform). Membrane-anchored 80 kDa fragments of the processed isoform JM-A CYT-1 are more readily degraded by the proteasome than fragments of isoform JM-A CYT-2, suggesting a prevalence of E4ICD2 over E4ICD1. Isoform JM-B CYT-1 and isoform JM-B CYT-2 lack the ADAM17 cleavage site and are not processed by ADAM17, precluding further processing by gamma-secretase. Autophosphorylated on tyrosine residues in response to ligand binding. Autophosphorylation occurs in trans, i.e. one subunit of the dimeric receptor phosphorylates tyrosine residues on the other subunit. Ligands trigger phosphorylation at specific tyrosine residues, thereby creating binding sites for scaffold proteins and effectors. Constitutively phosphorylated at a basal level when overexpressed in heterologous systems; ligand binding leads to increased phosphorylation. Phosphorylation at Tyr-1035 is important for interaction with STAT1. Phosphorylation at Tyr-1056 is important for interaction with PIK3R1. Phosphorylation at Tyr-1242 is important for interaction with SHC1. Phosphorylation at Tyr-1188 may also contribute to the interaction with SHC1. Isoform JM-A CYT-2 is constitutively phosphorylated on tyrosine residues in a ligand-independent manner. E4ICD2 but not E4ICD1 is phosphorylated on tyrosine residues. Post-translationally, ubiquitinated. During mitosis, the ERBB4 intracellular domain is ubiquitinated by the APC/C complex and targeted to proteasomal degradation. Isoform JM-A CYT-1 and isoform JM-B CYT-1 are ubiquitinated by WWP1. The ERBB4 intracellular domain (E4ICD1) is ubiquitinated, and this involves NEDD4. In terms of tissue distribution, expressed at highest levels in brain, heart, kidney, in addition to skeletal muscle, parathyroid, cerebellum, pituitary, spleen, testis and breast. Lower levels in thymus, lung, salivary gland, and pancreas. Isoform JM-A CYT-1 and isoform JM-B CYT-1 are expressed in cerebellum, but only the isoform JM-B is expressed in the heart.

The protein localises to the cell membrane. The protein resides in the nucleus. Its subcellular location is the mitochondrion. The enzyme catalyses L-tyrosyl-[protein] + ATP = O-phospho-L-tyrosyl-[protein] + ADP + H(+). Binding of a cognate ligand leads to dimerization and activation by autophosphorylation on tyrosine residues. In vitro kinase activity is increased by Mg(2+). Inhibited by PD153035, lapatinib, gefitinib (iressa, ZD1839), AG1478 and BIBX1382BS. Functionally, tyrosine-protein kinase that plays an essential role as cell surface receptor for neuregulins and EGF family members and regulates development of the heart, the central nervous system and the mammary gland, gene transcription, cell proliferation, differentiation, migration and apoptosis. Required for normal cardiac muscle differentiation during embryonic development, and for postnatal cardiomyocyte proliferation. Required for normal development of the embryonic central nervous system, especially for normal neural crest cell migration and normal axon guidance. Required for mammary gland differentiation, induction of milk proteins and lactation. Acts as cell-surface receptor for the neuregulins NRG1, NRG2, NRG3 and NRG4 and the EGF family members BTC, EREG and HBEGF. Ligand binding triggers receptor dimerization and autophosphorylation at specific tyrosine residues that then serve as binding sites for scaffold proteins and effectors. Ligand specificity and signaling is modulated by alternative splicing, proteolytic processing, and by the formation of heterodimers with other ERBB family members, thereby creating multiple combinations of intracellular phosphotyrosines that trigger ligand- and context-specific cellular responses. Mediates phosphorylation of SHC1 and activation of the MAP kinases MAPK1/ERK2 and MAPK3/ERK1. Isoform JM-A CYT-1 and isoform JM-B CYT-1 phosphorylate PIK3R1, leading to the activation of phosphatidylinositol 3-kinase and AKT1 and protect cells against apoptosis. Isoform JM-A CYT-1 and isoform JM-B CYT-1 mediate reorganization of the actin cytoskeleton and promote cell migration in response to NRG1. Isoform JM-A CYT-2 and isoform JM-B CYT-2 lack the phosphotyrosine that mediates interaction with PIK3R1, and hence do not phosphorylate PIK3R1, do not protect cells against apoptosis, and do not promote reorganization of the actin cytoskeleton and cell migration. Proteolytic processing of isoform JM-A CYT-1 and isoform JM-A CYT-2 gives rise to the corresponding soluble intracellular domains (4ICD) that translocate to the nucleus, promote nuclear import of STAT5A, activation of STAT5A, mammary epithelium differentiation, cell proliferation and activation of gene expression. The ERBB4 soluble intracellular domains (4ICD) colocalize with STAT5A at the CSN2 promoter to regulate transcription of milk proteins during lactation. The ERBB4 soluble intracellular domains can also translocate to mitochondria and promote apoptosis. This Homo sapiens (Human) protein is Receptor tyrosine-protein kinase erbB-4 (ERBB4).